We begin with the raw amino-acid sequence, 61 residues long: Disintegrin atroxatin (61 aa).

In terms of domain architecture, Disintegrin spans 1-61; that stretch reads NPCCDAATCK…ADCPRKGIYG (61 aa). 5 disulfides stabilise this stretch: Cys-3-Cys-26, Cys-9-Cys-23, Cys-17-Cys-23, Cys-22-Cys-47, and Cys-35-Cys-54. A Cell attachment site motif is present at residues 39–41; it reads RGD.

Belongs to the venom metalloproteinase (M12B) family. P-II subfamily. P-IIa sub-subfamily. In terms of assembly, monomer (disintegrin). In terms of tissue distribution, expressed by the venom gland.

It is found in the secreted. Inhibits fibrinogen interaction with platelets. Acts by binding to alpha-IIb/beta-3 (ITGA2B/ITGB3) on the platelet surface and inhibits aggregation induced by ADP, thrombin, platelet-activating factor and collagen. The sequence is that of Disintegrin atroxatin from Crotalus atrox (Western diamondback rattlesnake).